Here is a 156-residue protein sequence, read N- to C-terminus: Small ribosomal subunit protein uS7 (156 aa).

Belongs to the universal ribosomal protein uS7 family. As to quaternary structure, part of the 30S ribosomal subunit. Contacts proteins S9 and S11.

In terms of biological role, one of the primary rRNA binding proteins, it binds directly to 16S rRNA where it nucleates assembly of the head domain of the 30S subunit. Is located at the subunit interface close to the decoding center, probably blocks exit of the E-site tRNA. The protein is Small ribosomal subunit protein uS7 of Nitrobacter winogradskyi (strain ATCC 25391 / DSM 10237 / CIP 104748 / NCIMB 11846 / Nb-255).